A 435-amino-acid chain; its full sequence is Nuclear hormone receptor family member nhr-28 (435 aa).

The nuclear receptor DNA-binding region spans 5-80 (KKPCSVCGEA…VGMRKSAVQR (76 aa)). 2 consecutive NR C4-type zinc fingers follow at residues 8–28 (CSVC…CRAC) and 44–63 (CRAM…CRAC). The segment at 84–106 (LFGRQDSSDGSNPRVSPSTSWPM) is disordered. A compositionally biased stretch (polar residues) spans 91–104 (SDGSNPRVSPSTSW). An NR LBD domain is found at 113 to 374 (IEEPGMATLN…ETFYELVSGR (262 aa)).

It belongs to the nuclear hormone receptor family.

It is found in the nucleus. Its function is as follows. Orphan nuclear receptor. The protein is Nuclear hormone receptor family member nhr-28 of Caenorhabditis briggsae.